The chain runs to 389 residues: Geodin cluster transcriptional coactivator gedD (389 aa).

The HTH iclR-type domain occupies 13 to 83 (LAWHVQLLAC…QPGQIMHTPL (71 aa)). Residues 43 to 62 (VRDLAQLCGVSETTLSRVVR) constitute a DNA-binding region (H-T-H motif).

The protein localises to the nucleus. Transcriptional coactivator; part of the gene cluster that mediates the biosynthesis of geodin, an intermediate in the biosynthesis of other natural products. With gedR, coregulates the production of geodin. The chain is Geodin cluster transcriptional coactivator gedD (gedD) from Aspergillus terreus (strain NIH 2624 / FGSC A1156).